Reading from the N-terminus, the 64-residue chain is Putative calcium channel toxin Tx758 (64 aa).

Residues 1-18 (MSTFVIVFLLLTAVLCHA) form the signal peptide. A propeptide spanning residues 19-27 (EPALDETAR) is cleaved from the precursor. Cystine bridges form between C29–C43, C36–C49, and C42–C58.

Belongs to the scorpion calcin-like family. In terms of tissue distribution, expressed by the venom gland.

The protein resides in the secreted. Its function is as follows. May increase intracellular calcium release through the activation of nuclear inositol 1,4,5-trisphosphate receptors (ITPR) of cardiomyocytes, thereby causing an increase in the contraction frequency of these cells. This is Putative calcium channel toxin Tx758 from Buthus israelis (Israeli scorpion).